The sequence spans 424 residues: tRNA(Met) cytidine acetate ligase (424 aa).

ATP contacts are provided by residues 7–20 (ITEYNPFHNGHLHH), glycine 102, asparagine 174, and arginine 199.

The protein belongs to the TmcAL family.

Its subcellular location is the cytoplasm. The catalysed reaction is cytidine(34) in elongator tRNA(Met) + acetate + ATP = N(4)-acetylcytidine(34) in elongator tRNA(Met) + AMP + diphosphate. Functionally, catalyzes the formation of N(4)-acetylcytidine (ac(4)C) at the wobble position of elongator tRNA(Met), using acetate and ATP as substrates. First activates an acetate ion to form acetyladenylate (Ac-AMP) and then transfers the acetyl group to tRNA to form ac(4)C34. The chain is tRNA(Met) cytidine acetate ligase from Alkaliphilus metalliredigens (strain QYMF).